Here is a 91-residue protein sequence, read N- to C-terminus: Pyruvate kinase (91 aa).

Residue Arg48 coordinates substrate. Positions 50, 52, 82, and 83 each coordinate K(+). 50-53 (NFSH) contacts ATP. ATP is bound at residue Arg89.

Belongs to the pyruvate kinase family. Homotetramer. Mg(2+) serves as cofactor. Requires K(+) as cofactor.

It catalyses the reaction pyruvate + ATP = phosphoenolpyruvate + ADP + H(+). It functions in the pathway carbohydrate degradation; glycolysis; pyruvate from D-glyceraldehyde 3-phosphate: step 5/5. This is Pyruvate kinase from Leishmania braziliensis.